The primary structure comprises 237 residues: tRNA1(Val) (adenine(37)-N6)-methyltransferase (237 aa).

Belongs to the methyltransferase superfamily. tRNA (adenine-N(6)-)-methyltransferase family.

The protein localises to the cytoplasm. The enzyme catalyses adenosine(37) in tRNA1(Val) + S-adenosyl-L-methionine = N(6)-methyladenosine(37) in tRNA1(Val) + S-adenosyl-L-homocysteine + H(+). Its function is as follows. Specifically methylates the adenine in position 37 of tRNA(1)(Val) (anticodon cmo5UAC). The polypeptide is tRNA1(Val) (adenine(37)-N6)-methyltransferase (Pasteurella multocida (strain Pm70)).